Reading from the N-terminus, the 151-residue chain is Large ribosomal subunit protein bL9 (151 aa).

It belongs to the bacterial ribosomal protein bL9 family.

In terms of biological role, binds to the 23S rRNA. This chain is Large ribosomal subunit protein bL9, found in Francisella tularensis subsp. tularensis (strain FSC 198).